The sequence spans 391 residues: Succinyl-diaminopimelate desuccinylase (391 aa).

Position 78 (histidine 78) interacts with Zn(2+). Aspartate 80 is a catalytic residue. Residue aspartate 111 coordinates Zn(2+). Glutamate 145 serves as the catalytic Proton acceptor. Zn(2+) contacts are provided by glutamate 146, glutamate 174, and histidine 360.

This sequence belongs to the peptidase M20A family. DapE subfamily. In terms of assembly, homodimer. Zn(2+) serves as cofactor. It depends on Co(2+) as a cofactor.

It catalyses the reaction N-succinyl-(2S,6S)-2,6-diaminopimelate + H2O = (2S,6S)-2,6-diaminopimelate + succinate. Its pathway is amino-acid biosynthesis; L-lysine biosynthesis via DAP pathway; LL-2,6-diaminopimelate from (S)-tetrahydrodipicolinate (succinylase route): step 3/3. In terms of biological role, catalyzes the hydrolysis of N-succinyl-L,L-diaminopimelic acid (SDAP), forming succinate and LL-2,6-diaminopimelate (DAP), an intermediate involved in the bacterial biosynthesis of lysine and meso-diaminopimelic acid, an essential component of bacterial cell walls. The sequence is that of Succinyl-diaminopimelate desuccinylase from Albidiferax ferrireducens (strain ATCC BAA-621 / DSM 15236 / T118) (Rhodoferax ferrireducens).